The chain runs to 432 residues: Probable M18 family aminopeptidase 2 (432 aa).

Residues histidine 86, histidine 157, and histidine 408 each contribute to the Zn(2+) site.

Belongs to the peptidase M18 family. Zn(2+) is required as a cofactor.

The protein is Probable M18 family aminopeptidase 2 of Streptomyces avermitilis (strain ATCC 31267 / DSM 46492 / JCM 5070 / NBRC 14893 / NCIMB 12804 / NRRL 8165 / MA-4680).